Consider the following 139-residue polypeptide: Large ribosomal subunit protein bL21 (139 aa).

It belongs to the bacterial ribosomal protein bL21 family. Part of the 50S ribosomal subunit. Contacts protein L20.

Functionally, this protein binds to 23S rRNA in the presence of protein L20. The sequence is that of Large ribosomal subunit protein bL21 from Prochlorococcus marinus (strain NATL2A).